The chain runs to 123 residues: Protein TraJ (123 aa).

In terms of assembly, monomer.

It is found in the cytoplasm. Its function is as follows. Transfer of plasmid RP4 during bacterial conjugation requires the plasmid-encoded TraJ protein, which binds to a 19-base pair invert sequence repetition within the transfer origin. TraJ protein is bound to only one side of the DNA helix. This nucleoprotein structure is the initial complex in the pathway to assemble a functional relaxosome. The protein is Protein TraJ (traJ) of Escherichia coli.